A 249-amino-acid chain; its full sequence is uncharacterized protein (249 aa).

Residues histidine 10, histidine 12, glutamate 95, histidine 129, histidine 150, and aspartate 198 each contribute to the a divalent metal cation site.

It belongs to the metallo-dependent hydrolases superfamily. TatD-type hydrolase family. A divalent metal cation is required as a cofactor.

This is an uncharacterized protein from Methanocaldococcus jannaschii (strain ATCC 43067 / DSM 2661 / JAL-1 / JCM 10045 / NBRC 100440) (Methanococcus jannaschii).